Reading from the N-terminus, the 846-residue chain is Integrin beta-PS (846 aa).

Residues 1-28 (MILERNRRCQLALLMIAILAAIAGQTDA) form the signal peptide. The Extracellular segment spans residues 29 to 777 (QKAAKLTAVS…NKECPAKVFM (749 aa)). A disulfide bridge connects residues Cys-46 and Cys-55. Asn-72 is a glycosylation site (N-linked (GlcNAc...) asparagine). Residues 186–419 (DLYYLMDLSK…ELVKEEYRKI (234 aa)) enclose the VWFA domain. Cys-249 and Cys-252 are oxidised to a cystine. N-linked (GlcNAc...) asparagine glycosylation is found at Asn-266 and Asn-277. Cys-300 and Cys-341 are joined by a disulfide. N-linked (GlcNAc...) asparagine glycans are attached at residues Asn-403 and Asn-428. 21 disulfides stabilise this stretch: Cys-441–Cys-453, Cys-473–Cys-741, Cys-507–Cys-530, Cys-522–Cys-533, Cys-535–Cys-544, Cys-546–Cys-579, Cys-561–Cys-577, Cys-571–Cys-582, Cys-584–Cys-599, Cys-601–Cys-624, Cys-606–Cys-622, Cys-614–Cys-627, Cys-629–Cys-638, Cys-640–Cys-664, Cys-647–Cys-662, Cys-656–Cys-667, Cys-669–Cys-682, Cys-685–Cys-688, Cys-692–Cys-701, Cys-698–Cys-771, and Cys-719–Cys-749. I-EGF domains follow at residues 507-545 (CENP…NKCE), 546-600 (CSAT…KHCE), 601-639 (CDNF…SNCG), and 640-683 (CQES…RHCE). Asn-557 carries an N-linked (GlcNAc...) asparagine glycan. Asn-603 carries an N-linked (GlcNAc...) asparagine glycan. The N-linked (GlcNAc...) asparagine glycan is linked to Asn-644. Asn-718 is a glycosylation site (N-linked (GlcNAc...) asparagine). The chain crosses the membrane as a helical span at residues 778–798 (LGIVMGVIAAIVLVGLAILLL). At 799–846 (WKLLTTIHDRREFARFEKERMNAKWDTGENPIYKQATSTFKNPMYAGK) the chain is on the cytoplasmic side. Residues Tyr-831 and Tyr-843 each carry the phosphotyrosine modification.

It belongs to the integrin beta chain family. As to quaternary structure, heterodimer of an alpha and a beta subunit. Beta-PS associates with either alpha-PS1, alpha-PS2, alpha-PS3, alpha-PS4 or alpha-PS5. As to expression, in ovaries, strongly expressed in follicle cells. In oocytes, expressed in the forming dorsal appendages (at protein level). Expressed in the embryonic dorsal cuticle, the larval eye and the wing imaginal disk. In testes, detected at the interface between somatic hub cells and cyst stem cells.

The protein localises to the cell membrane. Its subcellular location is the apical cell membrane. It localises to the lateral cell membrane. It is found in the basal cell membrane. Functionally, integrin alpha-PS1/beta-PS is a receptor for laminin. Integrin alpha-PS2/beta-PS is a receptor for Tig, wb and Ten-m. Contributes to endodermal integrity and adhesion between the midgut epithelium and the surrounding visceral muscle. Essential for migration of the primordial midgut cells and for maintaining, but not establishing, cell polarity in the midgut epithelium. The two beta subunits mediate midgut migration by distinct mechanisms: beta-PS requires rhea/talin and Itgbn does not. Required for rhea/talin correct cellular localization in the midgut. Required for many embryonic (dorsal closure and somatic muscle attachments) and postembryonic developmental processes (attachment between cell layers of imaginal disks, organization of ommatidial arrays and flight muscle development). Involved in the function and/or development of the olfactory system. In the testes, essential for shv-dependent maintenance of somatic hub cells and their localization to the apical tip. Plays a role in timely border cell migration during oogenesis. This is Integrin beta-PS (mys) from Drosophila melanogaster (Fruit fly).